The following is a 226-amino-acid chain: Isoprenyl transferase (226 aa).

Residue aspartate 12 is part of the active site. Mg(2+) is bound at residue aspartate 12. Residues 13 to 16 (GNAR), tryptophan 17, lysine 25, histidine 29, and 57 to 59 (SSE) contribute to the substrate site. Asparagine 60 acts as the Proton acceptor in catalysis. Residues tryptophan 61, arginine 63, arginine 174, and 180–182 (RIS) contribute to the substrate site. Mg(2+) is bound at residue glutamate 193.

Belongs to the UPP synthase family. Homodimer. Mg(2+) serves as cofactor.

In terms of biological role, catalyzes the condensation of isopentenyl diphosphate (IPP) with allylic pyrophosphates generating different type of terpenoids. This is Isoprenyl transferase from Rickettsia typhi (strain ATCC VR-144 / Wilmington).